We begin with the raw amino-acid sequence, 480 residues long: Cysteine--tRNA ligase (480 aa).

Zn(2+) is bound at residue Cys-29. Residues 31-41 (ITVYDYCHLGH) carry the 'HIGH' region motif. Residues Cys-215, His-240, and Glu-244 each contribute to the Zn(2+) site. The 'KMSKS' region signature appears at 272-276 (KMSKS). Residue Lys-275 participates in ATP binding.

The protein belongs to the class-I aminoacyl-tRNA synthetase family. Monomer. Zn(2+) is required as a cofactor.

Its subcellular location is the cytoplasm. The enzyme catalyses tRNA(Cys) + L-cysteine + ATP = L-cysteinyl-tRNA(Cys) + AMP + diphosphate. The polypeptide is Cysteine--tRNA ligase (Microcystis aeruginosa (strain NIES-843 / IAM M-2473)).